The sequence spans 231 residues: MKRAVVVFSGGQDSTTCLVQALQQYDEVHCVTFDYGQRHRAEIDVARELALKLGARAHKVLDVTLLNELAVSSLTRDSIPVPDYEPEADGIPNTFVPGRNILFLTLAAIYAYQVKAEAVITGVCETDFSGYPDCRDEFVKALNHAVSLGMAKDIRFETPLMWIDKAETWALADYYGKLDLVRNETLTCYNGIKGDGCGHCAACNLRANGLNHYLADKPTVMAAIKQKTGLK.

8-18 (FSGGQDSTTCL) lines the ATP pocket. Zn(2+) contacts are provided by C188, C197, C200, and C203.

It belongs to the QueC family. Zn(2+) serves as cofactor.

It catalyses the reaction 7-carboxy-7-deazaguanine + NH4(+) + ATP = 7-cyano-7-deazaguanine + ADP + phosphate + H2O + H(+). It participates in purine metabolism; 7-cyano-7-deazaguanine biosynthesis. Its function is as follows. Catalyzes the ATP-dependent conversion of 7-carboxy-7-deazaguanine (CDG) to 7-cyano-7-deazaguanine (preQ(0)). The protein is 7-cyano-7-deazaguanine synthase of Escherichia coli O127:H6 (strain E2348/69 / EPEC).